Consider the following 129-residue polypeptide: Tumor necrosis factor receptor superfamily member 12A (129 aa).

Positions 1-27 (MASAWPRSLPQILVLGFGLVLMRAAAG) are cleaved as a signal peptide. The Extracellular segment spans residues 28-80 (EQAPGTSPCSSGSSWSADLDKCMDCASCPARPHSDFCLGCAAAPPAHFRLLWP). 3 cysteine pairs are disulfide-bonded: Cys36-Cys49, Cys52-Cys67, and Cys55-Cys64. One copy of the TNFR-Cys; atypical repeat lies at 36 to 67 (CSSGSSWSADLDKCMDCASCPARPHSDFCLGC). Residues 81 to 101 (ILGGALSLVLVLALVSSFLVW) traverse the membrane as a helical segment. The Cytoplasmic portion of the chain corresponds to 102–129 (RRCRRREKFTTPIEETGGEGCPGVALIQ).

In terms of assembly, associates with TRAF1 and TRAF2, and probably also with TRAF3. Highly expressed in fetal heart, intestine, kidney, liver, lung and skin, and in adult heart and ovary. Intermediate expression in adult kidney, lung and skin.

The protein localises to the membrane. Receptor for TNFSF12/TWEAK. Weak inducer of apoptosis in some cell types. Promotes angiogenesis and the proliferation of endothelial cells. May modulate cellular adhesion to matrix proteins. This is Tumor necrosis factor receptor superfamily member 12A (Tnfrsf12a) from Mus musculus (Mouse).